A 259-amino-acid chain; its full sequence is Probable ABC transporter permease protein RC0129 (259 aa).

The next 5 membrane-spanning stretches (helical) occupy residues 13–35 (TVKFAQSVGSFSLFSFAAVSSII), 49–69 (LFIGFHSLPVVAMTTFFSGAV), 148–168 (VITAIITMPCLVLIGDIIGVM), 195–215 (PIDVISGLVKAGVFGFIISII), and 237–257 (AVVNSSILILISNYLITELFF).

This sequence belongs to the MlaE permease family.

The protein resides in the cell inner membrane. Functionally, could be part of an ABC transporter complex. This chain is Probable ABC transporter permease protein RC0129, found in Rickettsia conorii (strain ATCC VR-613 / Malish 7).